Reading from the N-terminus, the 398-residue chain is Riboflavin biosynthesis protein RibBA (398 aa).

Residues 1-199 (MFHPIEEALE…IKDLIEYRYN (199 aa)) form a DHBP synthase region. Residues 26–27 (RE), aspartate 31, 138–142 (RAGHT), and glutamate 162 contribute to the D-ribulose 5-phosphate site. Glutamate 27 provides a ligand contact to Mg(2+). Histidine 141 serves as a coordination point for Mg(2+). The GTP cyclohydrolase II stretch occupies residues 200-398 (ITTLVNREVD…MKKLGHLLHF (199 aa)). 251–255 (RVHSE) is a GTP binding site. Residues cysteine 256, cysteine 267, and cysteine 269 each contribute to the Zn(2+) site. Residues glutamine 272, 294–296 (EGR), and threonine 316 each bind GTP. Catalysis depends on aspartate 328, which acts as the Proton acceptor; for GTP cyclohydrolase activity. The active-site Nucleophile; for GTP cyclohydrolase activity is the arginine 330. Residues threonine 351 and lysine 356 each contribute to the GTP site.

It in the N-terminal section; belongs to the DHBP synthase family. In the C-terminal section; belongs to the GTP cyclohydrolase II family. The cofactor is Mg(2+). It depends on Mn(2+) as a cofactor. Zn(2+) is required as a cofactor.

It carries out the reaction D-ribulose 5-phosphate = (2S)-2-hydroxy-3-oxobutyl phosphate + formate + H(+). The catalysed reaction is GTP + 4 H2O = 2,5-diamino-6-hydroxy-4-(5-phosphoribosylamino)-pyrimidine + formate + 2 phosphate + 3 H(+). The protein operates within cofactor biosynthesis; riboflavin biosynthesis; 2-hydroxy-3-oxobutyl phosphate from D-ribulose 5-phosphate: step 1/1. It functions in the pathway cofactor biosynthesis; riboflavin biosynthesis; 5-amino-6-(D-ribitylamino)uracil from GTP: step 1/4. In terms of biological role, catalyzes the conversion of D-ribulose 5-phosphate to formate and 3,4-dihydroxy-2-butanone 4-phosphate. Its function is as follows. Catalyzes the conversion of GTP to 2,5-diamino-6-ribosylamino-4(3H)-pyrimidinone 5'-phosphate (DARP), formate and pyrophosphate. This chain is Riboflavin biosynthesis protein RibBA, found in Bacillus velezensis (strain DSM 23117 / BGSC 10A6 / LMG 26770 / FZB42) (Bacillus amyloliquefaciens subsp. plantarum).